A 75-amino-acid polypeptide reads, in one-letter code: Cytochrome c oxidase assembly factor 5 (75 aa).

The region spanning 28 to 66 (QSDCVLQEGKSPKECLKEGYCKALQVTFFECKRSILDNR) is the CHCH domain. The Cx10C motif motif lies at 31–42 (CVLQEGKSPKEC). 2 cysteine pairs are disulfide-bonded: C31–C58 and C42–C48. The Cx9C motif signature appears at 48–58 (CKALQVTFFEC).

The protein belongs to the PET191 family.

Its function is as follows. Involved in an early step of the mitochondrial complex IV assembly process. This chain is Cytochrome c oxidase assembly factor 5 (coa5), found in Xenopus laevis (African clawed frog).